The chain runs to 301 residues: Putative hydro-lyase C5H10.01 (301 aa).

This sequence belongs to the D-glutamate cyclase family.

The protein is Putative hydro-lyase C5H10.01 of Schizosaccharomyces pombe (strain 972 / ATCC 24843) (Fission yeast).